Consider the following 378-residue polypeptide: 1-acyl-sn-glycerol-3-phosphate acyltransferase delta (378 aa).

The helical transmembrane segment at 11-31 (FLCHLVFCYVFIASGLIINTI) threads the bilayer. Positions 96-101 (HKFEID) match the HXXXXD motif motif. A run of 3 helical transmembrane segments spans residues 125-145 (ELAY…VFCS), 307-327 (TLVN…QFLV), and 338-358 (LASF…MIGV).

It belongs to the 1-acyl-sn-glycerol-3-phosphate acyltransferase family. Widely expressed with highest levels in skeletal muscle, followed by heart, liver, prostate and thymus.

Its subcellular location is the endoplasmic reticulum membrane. The enzyme catalyses a 1-acyl-sn-glycero-3-phosphate + an acyl-CoA = a 1,2-diacyl-sn-glycero-3-phosphate + CoA. It carries out the reaction (4Z,7Z,10Z,13Z,16Z,19Z)-docosahexaenoyl-CoA + 1-hexadecanoyl-sn-glycero-3-phosphate = 1-hexadecanoyl-2-(4Z,7Z,10Z,13Z,16Z,19Z-docosahexaenoyl)-sn-glycero-3-phosphate + CoA. The catalysed reaction is 1-octadecanoyl-sn-glycero-3-phosphate + (9Z,12Z)-octadecadienoyl-CoA = 1-octadecanoyl-2-(9Z,12Z-octadecadienoyl)-sn-glycero-3-phosphate + CoA. It catalyses the reaction 1-octadecanoyl-sn-glycero-3-phosphate + (4Z,7Z,10Z,13Z,16Z,19Z)-docosahexaenoyl-CoA = 1-octadecanoyl-2-(4Z,7Z,10Z,13Z,16Z,19Z-docosahexaenoyl)-sn-glycero-3-phosphate + CoA. The enzyme catalyses (4Z,7Z,10Z,13Z,16Z,19Z)-docosahexaenoyl-CoA + 1-(9Z-octadecenoyl)-sn-glycero-3-phosphate = 1-(9Z-octadecenoyl)-2-(4Z,7Z,10Z,13Z,16Z,19Z-docosahexaenoyl)-sn-glycero-3-phosphate + CoA. The protein operates within phospholipid metabolism; CDP-diacylglycerol biosynthesis; CDP-diacylglycerol from sn-glycerol 3-phosphate: step 2/3. Converts 1-acyl-sn-glycerol-3-phosphate (lysophosphatidic acid or LPA) into 1,2-diacyl-sn-glycerol-3-phosphate (phosphatidic acid or PA) by incorporating an acyl moiety at the sn-2 position of the glycerol backbone. Exhibits high acyl-CoA specificity for polyunsaturated fatty acyl-CoA, especially docosahexaenoyl-CoA (22:6-CoA, DHA-CoA). This Homo sapiens (Human) protein is 1-acyl-sn-glycerol-3-phosphate acyltransferase delta (AGPAT4).